A 177-amino-acid chain; its full sequence is Large ribosomal subunit protein uL10 (177 aa).

This sequence belongs to the universal ribosomal protein uL10 family. As to quaternary structure, part of the ribosomal stalk of the 50S ribosomal subunit. The N-terminus interacts with L11 and the large rRNA to form the base of the stalk. The C-terminus forms an elongated spine to which L12 dimers bind in a sequential fashion forming a multimeric L10(L12)X complex.

Forms part of the ribosomal stalk, playing a central role in the interaction of the ribosome with GTP-bound translation factors. The protein is Large ribosomal subunit protein uL10 of Thermoanaerobacter pseudethanolicus (strain ATCC 33223 / 39E) (Clostridium thermohydrosulfuricum).